A 215-amino-acid chain; its full sequence is GTP-binding protein YPT6 (215 aa).

Residue 17-24 coordinates GTP; the sequence is GEQGVGKT. The short motif at 39 to 47 is the Effector region element; the sequence is YQATIGIDF. GTP-binding positions include 65–69 and 124–127; these read DTAGQ and NKSD. The span at 178 to 196 shows a compositional bias: polar residues; the sequence is NSESTPLDSENANSANQNK. Residues 178–215 form a disordered region; that stretch reads NSESTPLDSENANSANQNKPGVIDISTAEEQEQSACQC. S-geranylgeranyl cysteine attachment occurs at residues cysteine 213 and cysteine 215. Cysteine 215 bears the Cysteine methyl ester mark.

The protein belongs to the small GTPase superfamily. Rab family. Interacts with YIF1, YIP3 and YIP4.

The protein resides in the cell membrane. Functionally, protein transport. Might participate in post-Golgi transport. The chain is GTP-binding protein YPT6 (YPT6) from Saccharomyces cerevisiae (strain ATCC 204508 / S288c) (Baker's yeast).